A 362-amino-acid chain; its full sequence is Isopentenyl-diphosphate delta-isomerase (362 aa).

Substrate is bound at residue 6–7 (RK). FMN contacts are provided by residues 65–67 (SIT), Ser95, and Asn124. Substrate is bound at residue 95 to 97 (SQR). Gln158 contacts substrate. Glu159 lines the Mg(2+) pocket. Residues Lys189, Thr219, 269 to 271 (GVR), and 290 to 291 (AL) contribute to the FMN site.

This sequence belongs to the IPP isomerase type 2 family. Homooctamer. Dimer of tetramers. FMN serves as cofactor. Requires NADPH as cofactor. Mg(2+) is required as a cofactor.

It localises to the cytoplasm. The enzyme catalyses isopentenyl diphosphate = dimethylallyl diphosphate. Its function is as follows. Involved in the biosynthesis of isoprenoids. Catalyzes the 1,3-allylic rearrangement of the homoallylic substrate isopentenyl (IPP) to its allylic isomer, dimethylallyl diphosphate (DMAPP). In Methanococcoides burtonii (strain DSM 6242 / NBRC 107633 / OCM 468 / ACE-M), this protein is Isopentenyl-diphosphate delta-isomerase.